Here is a 355-residue protein sequence, read N- to C-terminus: uncharacterized protein (355 aa).

This sequence belongs to the ycf89 family.

The protein resides in the plastid. The protein localises to the chloroplast. This is an uncharacterized protein from Trieres chinensis (Marine centric diatom).